The sequence spans 464 residues: Keratin, type I cytoskeletal 28 (464 aa).

The head stretch occupies residues 1–85 (MSLQFSNGSR…GSEGGLLSGN (85 aa)). The segment at 86–121 (EKVTMQNLNDRLASYLDNVRALEEANAELERKIKGW) is coil 1A. The region spanning 86-401 (EKVTMQNLND…RLIDGDGNSC (316 aa)) is the IF rod domain. The interval 122–143 (YEKYGPGSCRGLDHDYSRYHLT) is linker 1. Positions 144–235 (IEDLKNKIIS…KNHEEEMKAL (92 aa)) are coil 1B. The interval 236-258 (QCAAGGNVNVEMNAAPGVDLAVL) is linker 12. Residues 259 to 397 (LNNMRAEYEA…ETYCRLIDGD (139 aa)) are coil 2. Residues 398–464 (GNSCSKSKGF…NGKTEQRVPF (67 aa)) form a tail region. Residues 443 to 464 (IHSIEEKTSKMTNGKTEQRVPF) are disordered.

The protein belongs to the intermediate filament family. As to quaternary structure, heterotetramer of two type I and two type II keratins. Strongly expressed in skin and scalp, and weak expression observed in thymus. In the hair follicle, expressed in Henle layer, Huxley layer and in the irs cuticle. Expression extends from the bulb region up to the point of differentiation into the three layers. Also present in the medulla of beard hair (at protein level).

The protein resides in the cytoplasm. Functionally, essential for the proper assembly of types I and II keratin protein complexes and the formation of keratin intermediate filaments in the inner root sheath (irs). In Homo sapiens (Human), this protein is Keratin, type I cytoskeletal 28.